A 213-amino-acid chain; its full sequence is Nucleoside triphosphate pyrophosphatase (213 aa).

Residue Asp79 is the Proton acceptor of the active site.

It belongs to the Maf family. Requires a divalent metal cation as cofactor.

Its subcellular location is the cytoplasm. It catalyses the reaction a ribonucleoside 5'-triphosphate + H2O = a ribonucleoside 5'-phosphate + diphosphate + H(+). The enzyme catalyses a 2'-deoxyribonucleoside 5'-triphosphate + H2O = a 2'-deoxyribonucleoside 5'-phosphate + diphosphate + H(+). Functionally, nucleoside triphosphate pyrophosphatase. May have a dual role in cell division arrest and in preventing the incorporation of modified nucleotides into cellular nucleic acids. This chain is Nucleoside triphosphate pyrophosphatase, found in Rhodococcus erythropolis (strain PR4 / NBRC 100887).